The primary structure comprises 376 residues: Germination-specific cysteine protease 1 (376 aa).

An N-terminal signal peptide occupies residues 1–22 (MAPSTKVLSLLLLYVVVSLASG). A propeptide spans 23–144 (DESIINDHLQ…KYSAAVNGKE (122 aa)) (activation peptide). N-linked (GlcNAc...) asparagine glycosylation is present at N93. Cystine bridges form between C166–C208, C200–C241, and C299–C351. The active site involves C169. Residues H305 and N325 contribute to the active site.

The protein belongs to the peptidase C1 family.

In terms of biological role, probable thiol protease. The protein is Germination-specific cysteine protease 1 of Arabidopsis thaliana (Mouse-ear cress).